Reading from the N-terminus, the 434-residue chain is Glutamyl-tRNA reductase (434 aa).

Residues 54 to 57, S113, 118 to 120, and Q124 each bind substrate; these read TCNR and EAQ. Residue C55 is the Nucleophile of the active site. NADP(+) is bound at residue 193–198; the sequence is GGGEVS.

This sequence belongs to the glutamyl-tRNA reductase family. As to quaternary structure, homodimer.

It carries out the reaction (S)-4-amino-5-oxopentanoate + tRNA(Glu) + NADP(+) = L-glutamyl-tRNA(Glu) + NADPH + H(+). Its pathway is porphyrin-containing compound metabolism; protoporphyrin-IX biosynthesis; 5-aminolevulinate from L-glutamyl-tRNA(Glu): step 1/2. It participates in porphyrin-containing compound metabolism; chlorophyll biosynthesis. In terms of biological role, catalyzes the NADPH-dependent reduction of glutamyl-tRNA(Glu) to glutamate 1-semialdehyde (GSA). In Chloroflexus aurantiacus (strain ATCC 29366 / DSM 635 / J-10-fl), this protein is Glutamyl-tRNA reductase.